Reading from the N-terminus, the 287-residue chain is Orotidine 5'-phosphate decarboxylase (287 aa).

Catalysis depends on lysine 97, which acts as the Proton donor.

Belongs to the OMP decarboxylase family. Type 2 subfamily.

It carries out the reaction orotidine 5'-phosphate + H(+) = UMP + CO2. It participates in pyrimidine metabolism; UMP biosynthesis via de novo pathway; UMP from orotate: step 2/2. This is Orotidine 5'-phosphate decarboxylase (pyrF) from Clostridium perfringens (strain 13 / Type A).